The sequence spans 506 residues: Maturase K (506 aa).

It belongs to the intron maturase 2 family. MatK subfamily.

It is found in the plastid. Its subcellular location is the chloroplast. Its function is as follows. Usually encoded in the trnK tRNA gene intron. Probably assists in splicing its own and other chloroplast group II introns. The sequence is that of Maturase K from Cytisus scoparius (Scotch broom).